We begin with the raw amino-acid sequence, 154 residues long: Keratin-associated protein 9-9 (154 aa).

A run of 14 repeats spans residues 8–12 (CCQPT), 13–17 (CCRTT), 18–22 (CCRTT), 37–41 (CCQPS), 42–46 (CCVSS), 51–55 (CCRPA), 56–60 (CCQNT), 61–65 (CCRTT), 66–70 (CCQPT), 75–79 (CCGQT), 124–128 (CCRPA), 129–133 (CCETT), 134–137 (CCRT), and 148–152 (CCQPS). Positions 8–152 (CCQPTCCRTT…TCVSSCCQPS (145 aa)) are 14 X 5 AA repeats of C-C-[RQVGE]-[SPSTNQ]-[TASL].

It belongs to the KRTAP type 9 family. As to quaternary structure, interacts with hair keratins.

Functionally, in the hair cortex, hair keratin intermediate filaments are embedded in an interfilamentous matrix, consisting of hair keratin-associated proteins (KRTAP), which are essential for the formation of a rigid and resistant hair shaft through their extensive disulfide bond cross-linking with abundant cysteine residues of hair keratins. The matrix proteins include the high-sulfur and high-glycine-tyrosine keratins. The polypeptide is Keratin-associated protein 9-9 (KRTAP9-9) (Homo sapiens (Human)).